We begin with the raw amino-acid sequence, 370 residues long: 3-isopropylmalate dehydrogenase (370 aa).

NAD(+) is bound at residue 77–90 (GPKWDGVPYDARPE). Arg97, Arg107, Arg135, and Asp226 together coordinate substrate. Residues Asp226, Asp250, and Asp254 each contribute to the Mg(2+) site. 290–302 (GSAPDIAGKGMAN) lines the NAD(+) pocket.

Belongs to the isocitrate and isopropylmalate dehydrogenases family. LeuB type 1 subfamily. In terms of assembly, homodimer. It depends on Mg(2+) as a cofactor. Mn(2+) serves as cofactor.

The protein localises to the cytoplasm. It carries out the reaction (2R,3S)-3-isopropylmalate + NAD(+) = 4-methyl-2-oxopentanoate + CO2 + NADH. It participates in amino-acid biosynthesis; L-leucine biosynthesis; L-leucine from 3-methyl-2-oxobutanoate: step 3/4. Functionally, catalyzes the oxidation of 3-carboxy-2-hydroxy-4-methylpentanoate (3-isopropylmalate) to 3-carboxy-4-methyl-2-oxopentanoate. The product decarboxylates to 4-methyl-2 oxopentanoate. The protein is 3-isopropylmalate dehydrogenase of Rhodopseudomonas palustris (strain ATCC BAA-98 / CGA009).